Reading from the N-terminus, the 362-residue chain is Probable endopolygalacturonase B (362 aa).

The N-terminal stretch at 1–20 is a signal peptide; the sequence is MHFLQNAVVAATMGAALAAA. Positions 21 to 25 are excised as a propeptide; the sequence is APLEK. A disulfide bridge links Cys-28 with Cys-43. PbH1 repeat units follow at residues 155-184, 185-206, 207-227, 236-257, 265-287, and 299-344; these read ADHLTITDVTIDNSAGTSKGHNTDAFDIGQ, STYITIDGATVYNQDDCLAINS, GEHITFTNGYCDGGHGLSIGS, VNDVTISNSKVLNSQNGVRIKT, VENVKFEDITLSDISKYGIVVEQ, and TNGV…DVTG. Asp-199 (proton donor) is an active-site residue. Cys-201 and Cys-217 are oxidised to a cystine. His-221 is a catalytic residue. Cys-327 and Cys-332 are disulfide-bonded. Asn-334 carries an N-linked (GlcNAc...) asparagine glycan. Cys-351 and Cys-360 are joined by a disulfide.

This sequence belongs to the glycosyl hydrolase 28 family.

It localises to the secreted. The catalysed reaction is (1,4-alpha-D-galacturonosyl)n+m + H2O = (1,4-alpha-D-galacturonosyl)n + (1,4-alpha-D-galacturonosyl)m.. In terms of biological role, involved in maceration and soft-rotting of plant tissue. Hydrolyzes the 1,4-alpha glycosidic bonds of de-esterified pectate in the smooth region of the plant cell wall. This Aspergillus niger (strain ATCC MYA-4892 / CBS 513.88 / FGSC A1513) protein is Probable endopolygalacturonase B (pgaB).